The primary structure comprises 503 residues: Glycerol kinase (503 aa).

Residue Thr14 coordinates ADP. ATP contacts are provided by Thr14, Thr15, and Ser16. A sn-glycerol 3-phosphate-binding site is contributed by Thr14. Arg18 provides a ligand contact to ADP. Residues Arg84, Glu85, Tyr136, and Asp246 each contribute to the sn-glycerol 3-phosphate site. Residues Arg84, Glu85, Tyr136, Asp246, and Gln247 each contribute to the glycerol site. 2 residues coordinate ADP: Thr268 and Gly311. 4 residues coordinate ATP: Thr268, Gly311, Gln315, and Gly412. Residues Gly412 and Asn416 each coordinate ADP. Residues 468 to 481 (ERTFSPDSDNEKRE) are compositionally biased toward basic and acidic residues. A disordered region spans residues 468–489 (ERTFSPDSDNEKRERRYKGWKK).

It belongs to the FGGY kinase family.

It catalyses the reaction glycerol + ATP = sn-glycerol 3-phosphate + ADP + H(+). It participates in polyol metabolism; glycerol degradation via glycerol kinase pathway; sn-glycerol 3-phosphate from glycerol: step 1/1. With respect to regulation, inhibited by fructose 1,6-bisphosphate (FBP). Key enzyme in the regulation of glycerol uptake and metabolism. Catalyzes the phosphorylation of glycerol to yield sn-glycerol 3-phosphate. The chain is Glycerol kinase from Haemophilus influenzae (strain ATCC 51907 / DSM 11121 / KW20 / Rd).